We begin with the raw amino-acid sequence, 340 residues long: Nitrilase (340 aa).

Residues 7–273 enclose the CN hydrolase domain; the sequence is IRAAAVQIAP…EGMVVADLDM (267 aa). The active-site Proton acceptor is the Glu-47. Lys-129 is an active-site residue. Residue Cys-163 is the Nucleophile of the active site.

Belongs to the carbon-nitrogen hydrolase superfamily. Nitrilase family. Forms oligomers.

It carries out the reaction a nitrile + 2 H2O = a carboxylate + NH4(+). The enzyme catalyses phenylpropanonitrile + 2 H2O = 3-phenylpropanoate + NH4(+). It catalyses the reaction an aliphatic nitrile + 2 H2O = a carboxylate + NH4(+). Highly resistant to various miscible cosolvents and tolerates high substrate concentrations. Functionally, catalyzes the hydrolysis of a broad range of nitriles to yield their corresponding carboxylic acid and ammonia. In vitro, shows high activity toward benzylic/unsaturated nitriles. The preferred substrate is trans-cinnamonitrile, followed by mono/di-cyanopyridines and aromatic substituted nitriles, with a moderate activity toward 3-phenylpropionitrile. Shows weaker activity toward the common dinitrile fumaronitrile. Also shows weak activity toward some aliphatic nitriles, including adiponitrile and glutaronitrile, and the arylacetonitrile 2-thiopheneacetonitrile. This chain is Nitrilase, found in Paraburkholderia phymatum (strain DSM 17167 / CIP 108236 / LMG 21445 / STM815) (Burkholderia phymatum).